The following is a 366-amino-acid chain: Ubiquitin carboxyl-terminal hydrolase 46 (366 aa).

The 331-residue stretch at 35–365 (FGLVNFGNTC…SGYILFYQSR (331 aa)) folds into the USP domain. Catalysis depends on cysteine 44, which acts as the Nucleophile. 4 residues coordinate Zn(2+): cysteine 182, cysteine 185, cysteine 229, and cysteine 232. Histidine 313 functions as the Proton acceptor in the catalytic mechanism.

The protein belongs to the peptidase C19 family. USP12/USP46 subfamily. As to quaternary structure, interacts with WDR48. Interacts with WDR20. Interacts with DMWD. Component of the USP46/WDR20/WDR48 deubiquitinating complex. Detected in lung and spleen, and at lower levels in brain, kidney, testis and liver.

It localises to the cytoplasm. It carries out the reaction Thiol-dependent hydrolysis of ester, thioester, amide, peptide and isopeptide bonds formed by the C-terminal Gly of ubiquitin (a 76-residue protein attached to proteins as an intracellular targeting signal).. Its function is as follows. Deubiquitinating enzyme that plays a role in behavior, possibly by regulating GABA action. May act by mediating the deubiquitination of GAD1/GAD67. Has almost no deubiquitinating activity by itself and requires the interaction with WDR48 to have a high activity. Not involved in deubiquitination of monoubiquitinated FANCD2. The polypeptide is Ubiquitin carboxyl-terminal hydrolase 46 (Rattus norvegicus (Rat)).